Consider the following 254-residue polypeptide: uncharacterized protein (254 aa).

This is an uncharacterized protein from Methanocaldococcus jannaschii (strain ATCC 43067 / DSM 2661 / JAL-1 / JCM 10045 / NBRC 100440) (Methanococcus jannaschii).